Reading from the N-terminus, the 152-residue chain is MAKRVQVVLNEDVLSLGKDGDLVEVAPGYARNFLLPFGKAVPVTPAVMKQVGHRRAKQAEHQAAIKQEALDFQTALVTIGRFTVKKQTGEDDVLFGTVTNGDVAEAIETATKKEIDRRNIIVPEIHRTGSYKVQVKLHNEVNAEINLEVVSY.

This sequence belongs to the bacterial ribosomal protein bL9 family.

Binds to the 23S rRNA. The sequence is that of Large ribosomal subunit protein bL9 from Prochlorococcus marinus (strain MIT 9313).